Consider the following 365-residue polypeptide: Methylthioribose-1-phosphate isomerase (365 aa).

Substrate contacts are provided by residues 53 to 55 (RGA), Arg-90, and Gln-201. Asp-242 serves as the catalytic Proton donor. Residue 252 to 253 (NK) participates in substrate binding.

This sequence belongs to the eIF-2B alpha/beta/delta subunits family. MtnA subfamily.

It catalyses the reaction 5-(methylsulfanyl)-alpha-D-ribose 1-phosphate = 5-(methylsulfanyl)-D-ribulose 1-phosphate. It functions in the pathway amino-acid biosynthesis; L-methionine biosynthesis via salvage pathway; L-methionine from S-methyl-5-thio-alpha-D-ribose 1-phosphate: step 1/6. Functionally, catalyzes the interconversion of methylthioribose-1-phosphate (MTR-1-P) into methylthioribulose-1-phosphate (MTRu-1-P). In Methylorubrum populi (strain ATCC BAA-705 / NCIMB 13946 / BJ001) (Methylobacterium populi), this protein is Methylthioribose-1-phosphate isomerase.